A 295-amino-acid polypeptide reads, in one-letter code: Aquaporin-9 (295 aa).

Over 1-24 (MPSEKDGAKKSLMQRLALKSRIAK) the chain is Cytoplasmic. A helical transmembrane segment spans residues 25–43 (ETLSEFLGTFIMIVLGCSS). The Extracellular segment spans residues 44–57 (IAQAVLSRERFGGI). A helical transmembrane segment spans residues 58–77 (ITINIGFASAVVMALYVTFG). Residues 78–79 (IS) are Cytoplasmic-facing. Positions 80–92 (GGHINPAVSFAMC) form an intramembrane region, discontinuously helical. The NPA 1 signature appears at 84-86 (NPA). Residues 93–98 (AFGRME) lie on the Cytoplasmic side of the membrane. The chain crosses the membrane as a helical span at residues 99-123 (WFKFPFYVGAQFLGAFVGAATVFGI). At 124-160 (YYDGLMAFAGGKLLVVGENATAFIFATYPAPFISTPG) the chain is on the extracellular side. Residues 161 to 178 (AFVDQVVSTMFLLLIVFA) traverse the membrane as a helical segment. Residues 179-190 (MFDSRNLGVPRG) lie on the Cytoplasmic side of the membrane. Residues 191–207 (LEPVVIGLLIIVLSCSL) traverse the membrane as a helical segment. The Extracellular segment spans residues 208–210 (GLN). The segment at residues 211–225 (SGCAMNPARDLSPRL) is an intramembrane region (discontinuously helical). The NPA 2 motif lies at 216-218 (NPA). At 226 to 243 (FTALAGWGFEVFTVGNNF) the chain is on the extracellular side. A helical membrane pass occupies residues 244–264 (WWIPVVGPMIGAFLGGLIYIL). Over 265–295 (FIQMHHSKLDPDMKAEPSENNLEKHELSVIM) the chain is Cytoplasmic.

It belongs to the MIP/aquaporin (TC 1.A.8) family. As to quaternary structure, homotetramer; each monomer provides an independent glycerol/water pore. As to expression, detected in testis and liver. Detected in immature spermatocytes and in interstitial Leydig cells.

It is found in the cell membrane. Its subcellular location is the basolateral cell membrane. It carries out the reaction H2O(in) = H2O(out). It catalyses the reaction glycerol(in) = glycerol(out). The catalysed reaction is urea(in) = urea(out). The enzyme catalyses (S)-lactate(in) = (S)-lactate(out). It carries out the reaction NH4(+)(in) = NH4(+)(out). It catalyses the reaction uracil(in) = uracil(out). The catalysed reaction is adenine(out) = adenine(in). The enzyme catalyses 3-hydroxybutanoate(in) = 3-hydroxybutanoate(out). It carries out the reaction D-sorbitol(in) = D-sorbitol(out). It catalyses the reaction D-mannitol(in) = D-mannitol(out). The catalysed reaction is H2O2(out) = H2O2(in). The enzyme catalyses arsenite(in) = arsenite(out). It carries out the reaction selenite(in) = selenite(out). Channel activity is inhibited by mercury ions and phloretin. Functionally, aquaglyceroporins form homotetrameric transmembrane channels, with each monomer independently mediating glycerol and water transport across the plasma membrane along their osmotic gradient. AQP9 is the primary route for glycerol uptake in hepatocytes, supporting hepatic gluconeogenesis. It exhibits broad specificity and may transport various small, non-charged solutes, including carbamides, polyols, purines, and pyrimidines. AQP9 may also facilitate hepatic urea extrusion. Due to its permeability to lactate, AQP9 might participate in the astrocyte-to-neuron lactate shuttle, supplying neurons with energy. Additionally, AQP9 is permeable to arsenite, contributing to arsenic excretion by the liver and providing partial protection against arsenic toxicity. It is also permeable to H2O2 in vivo. Could also be permeable to ammonium. The protein is Aquaporin-9 of Rattus norvegicus (Rat).